Reading from the N-terminus, the 587-residue chain is ASI1-immunoprecipitated protein 3 (587 aa).

The tract at residues 1 to 118 (MVLSRRFAQV…NVTGKGKGKR (118 aa)) is disordered. The segment covering 66 to 98 (EDEDMAEGDDDQAEEETNPEAEEEEDEEEEEKP) has biased composition (acidic residues). The region spanning 129–248 (NTYDLEVPVL…TVEKKLWKLT (120 aa)) is the BAH domain. Residues 344-493 (HRDKCLGKLL…RMQMTSVRCS (150 aa)) enclose the TFIIS central domain. 2 disordered regions span residues 371–396 (EAKV…GKDE) and 539–587 (TDKP…KKPE). The segment covering 560–570 (ETNKPKDEALK) has biased composition (basic and acidic residues). Over residues 571–581 (TNDSNADNNPE) the composition is skewed to polar residues.

Interacts with MOM1. Component of the ASI1-AIPP1-EDM2 (AAE) RNA regulatory complex composed of at least AIPP1/EDM3, ASI1 and EDM2 and may contain CPL2, AIPP2 and AIPP3/BDT1. Part of the BAH-PHD bivalent histone reader complex that contains AIPP2, PAIPP2 and AIPP3/BDT1; the BAH-PHD module associates with CPL2 to form the BAH-PHD-CPL2 complex (BPC) for transcriptional repression. Binds directly to CPL2, PHD1, PAIPP2/PHD2, AIPP2/PHD3, PHD4, PHD5 and PHD6. Expressed ubiquitously.

The protein localises to the nucleus. In terms of biological role, transcriptional repressor. Together with PHD finger-containing proteins (e.g. PHD1, PAIPP2/PHD2, AIPP2/PHD3, PHD4, PHD5 and PHD6), cooperates to form a BAH-PHD bivalent histone reader complex able to read histone H3 lysine 27 trimethylation (H3K27me3) and low-methylated H3K4 histone marks in order to regulate transcription, especially to prevent early flowering; H3K27me3 reader of this complex. CPL2 is subsequently recruited to form a BAH-PHD-CPL2 complex (BPC) in order to silence several H3K27me3 and low-methylated H3K4 enriched loci, including AGO5, via the phosphorylation state-dependent inhibition of Pol II release from the transcriptional start site (e.g. Ser5P-Pol II dephosphorylation). The BPC complex represses flowering by inhibiting the expression of several genes, including AGL6, FT, FUL and SOC1. Prevents the accumulation of intronic heterochromatin-containing genes (e.g. IBM1, At3g05410 and RPP7). Seems to not be involved in vernalization establishment, by contrast to orthologs in grass plants. This Arabidopsis thaliana (Mouse-ear cress) protein is ASI1-immunoprecipitated protein 3.